The primary structure comprises 607 residues: Chaperone protein DnaK (607 aa).

A Phosphothreonine; by autocatalysis modification is found at Thr173. Residues 577–588 (AQAQQGAEGAAS) are compositionally biased toward low complexity. The disordered stretch occupies residues 577–607 (AQAQQGAEGAASQDDDVVDADFTEVKDDDNK). Residues 589-598 (QDDDVVDADF) show a composition bias toward acidic residues.

Belongs to the heat shock protein 70 family.

Its function is as follows. Acts as a chaperone. The sequence is that of Chaperone protein DnaK from Macrococcus caseolyticus (strain JCSC5402) (Macrococcoides caseolyticum).